The chain runs to 625 residues: Chaperone protein HtpG (625 aa).

The a; substrate-binding stretch occupies residues 1–337 (MNIQKKEVYS…SNNLPLNVSR (337 aa)). The interval 338 to 552 (EILQDNSITQ…SNEMSTQMAK (215 aa)) is b. Residues 553-625 (LFSAAGQSVP…ARTNKLILEQ (73 aa)) are c.

It belongs to the heat shock protein 90 family. As to quaternary structure, homodimer.

It localises to the cytoplasm. Molecular chaperone. Has ATPase activity. The protein is Chaperone protein HtpG of Buchnera aphidicola subsp. Schizaphis graminum (strain Sg).